The sequence spans 330 residues: Ketol-acid reductoisomerase (NADP(+)) (330 aa).

Positions 3-184 (LPVYYDKDID…GGGRMGVLKT (182 aa)) constitute a KARI N-terminal Rossmann domain. NADP(+)-binding positions include 26–29 (YGAQ), S52, and S54. H109 is an active-site residue. G135 lines the NADP(+) pocket. Residues 185-329 (SFKEECESDL…EILRAPFNHK (145 aa)) form the KARI C-terminal knotted domain. Mg(2+) contacts are provided by D193, E197, E229, and E233. A substrate-binding site is contributed by S254.

It belongs to the ketol-acid reductoisomerase family. Mg(2+) is required as a cofactor.

The catalysed reaction is (2R)-2,3-dihydroxy-3-methylbutanoate + NADP(+) = (2S)-2-acetolactate + NADPH + H(+). It catalyses the reaction (2R,3R)-2,3-dihydroxy-3-methylpentanoate + NADP(+) = (S)-2-ethyl-2-hydroxy-3-oxobutanoate + NADPH + H(+). Its pathway is amino-acid biosynthesis; L-isoleucine biosynthesis; L-isoleucine from 2-oxobutanoate: step 2/4. The protein operates within amino-acid biosynthesis; L-valine biosynthesis; L-valine from pyruvate: step 2/4. Functionally, involved in the biosynthesis of branched-chain amino acids (BCAA). Catalyzes an alkyl-migration followed by a ketol-acid reduction of (S)-2-acetolactate (S2AL) to yield (R)-2,3-dihydroxy-isovalerate. In the isomerase reaction, S2AL is rearranged via a Mg-dependent methyl migration to produce 3-hydroxy-3-methyl-2-ketobutyrate (HMKB). In the reductase reaction, this 2-ketoacid undergoes a metal-dependent reduction by NADPH to yield (R)-2,3-dihydroxy-isovalerate. The protein is Ketol-acid reductoisomerase (NADP(+)) of Helicobacter pylori (strain HPAG1).